Reading from the N-terminus, the 101-residue chain is RNA-binding protein Hfq (101 aa).

The 60-residue stretch at 9 to 68 folds into the Sm domain; that stretch reads DPFLNALRRERVPVSIYLVNGIKLQGQVESFDQFVILLKNTVSQMVYKHAISTVVPSPPV. Positions 62 to 101 are disordered; sequence VVPSPPVSHHSNTPSGSTNNYHGSNPSAPQQPQQDSDDAE. A compositionally biased stretch (polar residues) spans 70–86; that stretch reads HHSNTPSGSTNNYHGSN.

This sequence belongs to the Hfq family. In terms of assembly, homohexamer.

RNA chaperone that binds small regulatory RNA (sRNAs) and mRNAs to facilitate mRNA translational regulation in response to envelope stress, environmental stress and changes in metabolite concentrations. Also binds with high specificity to tRNAs. This chain is RNA-binding protein Hfq, found in Yersinia pestis (strain Pestoides F).